The primary structure comprises 1769 residues: Gamma-tubulin complex component 6 (1769 aa).

3 disordered regions span residues 809–842 (EAQQ…HSCD), 859–881 (STPS…PFST), and 1284–1360 (TVCS…AEAR). Over residues 820–831 (FPSTGSQVTSTG) the composition is skewed to polar residues. Residues 1314–1326 (PEEKGPGKSRDAE) are compositionally biased toward basic and acidic residues. Over residues 1332–1343 (LPSSSQEDTAVP) the composition is skewed to polar residues.

This sequence belongs to the TUBGCP family. In terms of assembly, component of the gamma-tubulin ring complex (gTuRC) consisting of TUBGCP2, TUBGCP3, TUBGCP4, TUBGCP5 and TUBGCP6 and gamma-tubulin TUBG1 or TUBG2. TUBGCP2, TUBGCP3, TUBGCP4, TUBGCP5 and TUBGCP6 assemble in a 5:5:2:1:1 stoichiometry; each is associated with a gamma-tubulin, thereby arranging 14 gamma-tubulins in a helical manner. Gamma-tubulin at the first position is blocked by TUBGCP3 at the last position, allowing 13 protafilaments to grow into a microtubule. The gTuRC (via TUBGCP3 and TUBGCP6) interacts with ACTB and MZT1; the interactions form a luminal bridge that stabilizes the initial structure during complex assembly. The gTuRC (via TUBGCP2) interacts with MZT2A/MZT2B and CDK5RAP2 (via CM1 motif); the interactions play a role in gTuRC activation.

The protein resides in the cytoplasm. Its subcellular location is the cytoskeleton. It localises to the microtubule organizing center. It is found in the centrosome. Functionally, component of the gamma-tubulin ring complex (gTuRC) which mediates microtubule nucleation. The gTuRC regulates the minus-end nucleation of alpha-beta tubulin heterodimers that grow into microtubule protafilaments, a critical step in centrosome duplication and spindle formation. The sequence is that of Gamma-tubulin complex component 6 (Tubgcp6) from Mus musculus (Mouse).